A 244-amino-acid polypeptide reads, in one-letter code: UL16-binding protein 1 (244 aa).

The first 25 residues, 1–25, serve as a signal peptide directing secretion; it reads MAAAASPAFLLCLPLLHLLSGWSRA. The MHC class I alpha-1 like stretch occupies residues 26-117; sequence GWVDTHCLCY…IQVENLIPIE (92 aa). C50 and C66 are disulfide-bonded. N-linked (GlcNAc...) asparagine glycosylation is present at N82. The tract at residues 118-208 is MHC class I alpha-2 like; sequence PLTLQARMSC…MYWEQMLDPT (91 aa). C127 and C190 are oxidised to a cystine. G216 is lipidated: GPI-anchor amidated glycine. The propeptide at 217–244 is removed in mature form; the sequence is TTQPKAMATTLSPWSLLIIFLCFILAGR.

Belongs to the MHC class I family. Interacts with KLRK1/NKG2D. Does not bind to beta2-microglobulin. As to quaternary structure, (Microbial infection) In CMV-infected cells, interacts with the viral glycoprotein UL16; this interaction causes ULBP1 retention in the endoplasmic reticulum and cis-Golgi and prevents binding to and activation of KLRK1/NKG2D, providing CMV with an immune evasion mechanism. As to expression, expressed in T-cells, B-cells, erythroleukemia cell lines and in a wide range of tissues including heart, brain, lung, liver, testis, lymph node, thymus, tonsil and bone marrow. Also found in fetal heart, brain, lung and liver.

Its subcellular location is the cell membrane. It localises to the endoplasmic reticulum. Binds and activates the KLRK1/NKG2D receptor, mediating natural killer cell cytotoxicity. This is UL16-binding protein 1 (ULBP1) from Homo sapiens (Human).